Reading from the N-terminus, the 343-residue chain is Probable dual-specificity RNA methyltransferase RlmN (343 aa).

E91 serves as the catalytic Proton acceptor. The 230-residue stretch at H97–D326 folds into the Radical SAM core domain. A disulfide bridge links C104 with C331. C111, C115, and C118 together coordinate [4Fe-4S] cluster. S-adenosyl-L-methionine-binding positions include G158 to E159, S190, S213 to H215, and N289. Catalysis depends on C331, which acts as the S-methylcysteine intermediate.

It belongs to the radical SAM superfamily. RlmN family. It depends on [4Fe-4S] cluster as a cofactor.

Its subcellular location is the cytoplasm. It catalyses the reaction adenosine(2503) in 23S rRNA + 2 reduced [2Fe-2S]-[ferredoxin] + 2 S-adenosyl-L-methionine = 2-methyladenosine(2503) in 23S rRNA + 5'-deoxyadenosine + L-methionine + 2 oxidized [2Fe-2S]-[ferredoxin] + S-adenosyl-L-homocysteine. The catalysed reaction is adenosine(37) in tRNA + 2 reduced [2Fe-2S]-[ferredoxin] + 2 S-adenosyl-L-methionine = 2-methyladenosine(37) in tRNA + 5'-deoxyadenosine + L-methionine + 2 oxidized [2Fe-2S]-[ferredoxin] + S-adenosyl-L-homocysteine. Its function is as follows. Specifically methylates position 2 of adenine 2503 in 23S rRNA and position 2 of adenine 37 in tRNAs. The sequence is that of Probable dual-specificity RNA methyltransferase RlmN from Thermotoga petrophila (strain ATCC BAA-488 / DSM 13995 / JCM 10881 / RKU-1).